A 519-amino-acid polypeptide reads, in one-letter code: Probable FAD synthase (519 aa).

Residues A17–I108 form a molybdenum cofactor biosynthesis protein-like region. The segment at Q328–K485 is FAD synthase.

It in the N-terminal section; belongs to the MoaB/Mog family. The protein in the C-terminal section; belongs to the PAPS reductase family. FAD1 subfamily. Mg(2+) is required as a cofactor.

The enzyme catalyses FMN + ATP + H(+) = FAD + diphosphate. It functions in the pathway cofactor biosynthesis; FAD biosynthesis; FAD from FMN: step 1/1. Its function is as follows. Catalyzes the adenylation of flavin mononucleotide (FMN) to form flavin adenine dinucleotide (FAD) coenzyme. The polypeptide is Probable FAD synthase (Caenorhabditis elegans).